A 108-amino-acid chain; its full sequence is ATP-dependent Clp protease adapter protein ClpS (108 aa).

Residues 1-15 (MPRESSPDSHHEHGV) show a composition bias toward basic and acidic residues. The disordered stretch occupies residues 1–24 (MPRESSPDSHHEHGVAVEPARPEV).

It belongs to the ClpS family. Binds to the N-terminal domain of the chaperone ClpA.

Its function is as follows. Involved in the modulation of the specificity of the ClpAP-mediated ATP-dependent protein degradation. The chain is ATP-dependent Clp protease adapter protein ClpS from Stenotrophomonas maltophilia (strain R551-3).